A 630-amino-acid polypeptide reads, in one-letter code: 1,4-alpha-glucan branching enzyme GlgB (630 aa).

Residue Asp-308 is the Nucleophile of the active site. The active-site Proton donor is Glu-361.

Belongs to the glycosyl hydrolase 13 family. GlgB subfamily. In terms of assembly, monomer.

It catalyses the reaction Transfers a segment of a (1-&gt;4)-alpha-D-glucan chain to a primary hydroxy group in a similar glucan chain.. It participates in glycan biosynthesis; glycogen biosynthesis. Functionally, catalyzes the formation of the alpha-1,6-glucosidic linkages in glycogen by scission of a 1,4-alpha-linked oligosaccharide from growing alpha-1,4-glucan chains and the subsequent attachment of the oligosaccharide to the alpha-1,6 position. The chain is 1,4-alpha-glucan branching enzyme GlgB from Halothermothrix orenii (strain H 168 / OCM 544 / DSM 9562).